The chain runs to 396 residues: Actin-related protein 6 (396 aa).

Thr-2 is modified (N-acetylthreonine). Lys-260 is modified (N6-acetyllysine).

This sequence belongs to the actin family. ARP6 subfamily. As to quaternary structure, component of the chromatin-remodeling SRCAP complex composed of at least SRCAP, DMAP1, RUVBL1, RUVBL2, ACTL6A, YEATS4, ACTR6 and ZNHIT1. Interacts with CBX1, CBX3 and CBX5.

The protein localises to the cytoplasm. It is found in the cytoskeleton. The protein resides in the nucleus. Its subcellular location is the nucleolus. In terms of biological role, required for formation and/or maintenance of proper nucleolar structure and function. Plays a dual role in the regulation of ribosomal DNA (rDNA) transcription. In the presence of high glucose, maintains active rDNA transcription through H2A.Z deposition and under glucose starvation, is required for the repression of rDNA transcription, and this function may be independent of H2A.Z. The sequence is that of Actin-related protein 6 (Actr6) from Mus musculus (Mouse).